The primary structure comprises 380 residues: Glucose-1-phosphate adenylyltransferase (380 aa).

Residues Gly164, 179–180 (EK), and Ser190 each bind alpha-D-glucose 1-phosphate.

The protein belongs to the bacterial/plant glucose-1-phosphate adenylyltransferase family. As to quaternary structure, homotetramer.

The enzyme catalyses alpha-D-glucose 1-phosphate + ATP + H(+) = ADP-alpha-D-glucose + diphosphate. It functions in the pathway glycan biosynthesis; glycogen biosynthesis. Involved in the biosynthesis of ADP-glucose, a building block required for the elongation reactions to produce glycogen. Catalyzes the reaction between ATP and alpha-D-glucose 1-phosphate (G1P) to produce pyrophosphate and ADP-Glc. The polypeptide is Glucose-1-phosphate adenylyltransferase (Streptococcus pneumoniae (strain CGSP14)).